The sequence spans 402 residues: Zinc finger protein 587B (402 aa).

Residues 15-91 form the KRAB domain; it reads VTFEDVAVKF…PVTGVSPKKA (77 aa). The C2H2-type 1 zinc finger occupies 92–114; it reads HPCEMCGPILGDILHVADHQGTH. The C2H2-type 2; degenerate zinc-finger motif lies at 120–142; it reads HRCEAWGNKLYDSGNFHQHQNEH. Residues lysine 177, lysine 200, and lysine 253 each participate in a glycyl lysine isopeptide (Lys-Gly) (interchain with G-Cter in SUMO2) cross-link. 5 C2H2-type zinc fingers span residues 242–264, 270–292, 298–320, 326–348, and 354–383; these read YVCC…QRVH, YECG…QQFH, YGCE…QKVH, YECG…QRIH, and YKCG…WVDH. Residue lysine 366 forms a Glycyl lysine isopeptide (Lys-Gly) (interchain with G-Cter in SUMO2) linkage.

This sequence belongs to the krueppel C2H2-type zinc-finger protein family.

It localises to the nucleus. Functionally, may be involved in transcriptional regulation. This Homo sapiens (Human) protein is Zinc finger protein 587B (ZNF587B).